Consider the following 452-residue polypeptide: Pup--protein ligase (452 aa).

Residue Glu-9 participates in Mg(2+) binding. Arg-53 contacts ATP. Mg(2+) is bound at residue Tyr-55. Asp-57 acts as the Proton acceptor in catalysis. Residue Glu-63 coordinates Mg(2+). Residues Thr-66 and Trp-419 each coordinate ATP.

Belongs to the Pup ligase/Pup deamidase family. Pup-conjugating enzyme subfamily.

It carries out the reaction ATP + [prokaryotic ubiquitin-like protein]-L-glutamate + [protein]-L-lysine = ADP + phosphate + N(6)-([prokaryotic ubiquitin-like protein]-gamma-L-glutamyl)-[protein]-L-lysine.. It functions in the pathway protein degradation; proteasomal Pup-dependent pathway. Its pathway is protein modification; protein pupylation. Catalyzes the covalent attachment of the prokaryotic ubiquitin-like protein modifier Pup to the proteasomal substrate proteins, thereby targeting them for proteasomal degradation. This tagging system is termed pupylation. The ligation reaction involves the side-chain carboxylate of the C-terminal glutamate of Pup and the side-chain amino group of a substrate lysine. The polypeptide is Pup--protein ligase (Mycobacterium tuberculosis (strain KZN 1435 / MDR)).